A 345-amino-acid polypeptide reads, in one-letter code: NADH-quinone oxidoreductase subunit H 1 (345 aa).

The next 9 membrane-spanning stretches (helical) occupy residues 11-31 (IILT…ISLL), 50-70 (PNVV…KYIF), 84-104 (FFLA…VIPF), 115-135 (VAIL…IMGG), 161-181 (LGLI…SHIV), 187-207 (AFGL…LFFI), 248-268 (YIAI…GWLS), 277-297 (VFWM…VKAI), and 309-329 (IGWK…AFLA).

It belongs to the complex I subunit 1 family. As to quaternary structure, NDH-1 is composed of 14 different subunits. Subunits NuoA, H, J, K, L, M, N constitute the membrane sector of the complex.

The protein resides in the cell inner membrane. The catalysed reaction is a quinone + NADH + 5 H(+)(in) = a quinol + NAD(+) + 4 H(+)(out). NDH-1 shuttles electrons from NADH, via FMN and iron-sulfur (Fe-S) centers, to quinones in the respiratory chain. The immediate electron acceptor for the enzyme in this species is believed to be ubiquinone. Couples the redox reaction to proton translocation (for every two electrons transferred, four hydrogen ions are translocated across the cytoplasmic membrane), and thus conserves the redox energy in a proton gradient. This subunit may bind ubiquinone. The chain is NADH-quinone oxidoreductase subunit H 1 from Cereibacter sphaeroides (strain ATCC 17023 / DSM 158 / JCM 6121 / CCUG 31486 / LMG 2827 / NBRC 12203 / NCIMB 8253 / ATH 2.4.1.) (Rhodobacter sphaeroides).